The chain runs to 522 residues: AAA ATPase forming ring-shaped complexes (522 aa).

The segment at 1–26 (MGQEKHTDAASQSRDPEAVAAHENDQ) is disordered. Positions 20–57 (AAHENDQLRQRNHALAKALTRATEELRKAKAQLEQFMA) form a coiled coil. Residue 248-253 (GNGKTL) participates in ATP binding.

The protein belongs to the AAA ATPase family. In terms of assembly, homohexamer. Assembles into a hexameric ring structure.

This is AAA ATPase forming ring-shaped complexes from Bifidobacterium animalis subsp. lactis (strain AD011).